The following is a 102-amino-acid chain: Large ribosomal subunit protein uL24 (102 aa).

The protein belongs to the universal ribosomal protein uL24 family. Part of the 50S ribosomal subunit.

In terms of biological role, one of two assembly initiator proteins, it binds directly to the 5'-end of the 23S rRNA, where it nucleates assembly of the 50S subunit. One of the proteins that surrounds the polypeptide exit tunnel on the outside of the subunit. The polypeptide is Large ribosomal subunit protein uL24 (Rhizobium etli (strain CIAT 652)).